We begin with the raw amino-acid sequence, 472 residues long: Transcription factor TGAL1 (472 aa).

Residues 136-190 are disordered; the sequence is WGESTIADTSPRTDTSTDPDTDERNQMFEQGQLAAPTASDSSDRSKDKLDHKTLR. Low complexity predominate over residues 143-153; that stretch reads DTSPRTDTSTD. Basic and acidic residues predominate over residues 176 to 187; it reads SSDRSKDKLDHK. Residues 185 to 229 form the bZIP domain; that stretch reads DHKTLRRLAQNREAARKSRLRKKAYIQNLESSRLKLTQIEQELQR. The basic motif stretch occupies residues 187–207; that stretch reads KTLRRLAQNREAARKSRLRKK. Residues 213 to 227 are leucine-zipper; sequence LESSRLKLTQIEQEL. The DOG1 domain maps to 252 to 469; sequence ALAFDMEYAR…RALSSLWLAR (218 aa).

This sequence belongs to the bZIP family. As to quaternary structure, isoforms 1 and 2 interact with NPR2/NH2. Isoform 2 interacts with NPR1/NH1 and NPR3/NH3.

It is found in the nucleus. Transcriptional regulator involved in defense response. The protein is Transcription factor TGAL1 of Oryza sativa subsp. japonica (Rice).